We begin with the raw amino-acid sequence, 173 residues long: Large ribosomal subunit protein uL10 (173 aa).

Belongs to the universal ribosomal protein uL10 family. Part of the ribosomal stalk of the 50S ribosomal subunit. The N-terminus interacts with L11 and the large rRNA to form the base of the stalk. The C-terminus forms an elongated spine to which L12 dimers bind in a sequential fashion forming a multimeric L10(L12)X complex.

Its function is as follows. Forms part of the ribosomal stalk, playing a central role in the interaction of the ribosome with GTP-bound translation factors. The chain is Large ribosomal subunit protein uL10 from Chlorobium phaeobacteroides (strain BS1).